The chain runs to 159 residues: Transcription elongation factor GreA (159 aa).

The stretch at Arg-5–Ile-77 forms a coiled coil.

This sequence belongs to the GreA/GreB family.

Necessary for efficient RNA polymerase transcription elongation past template-encoded arresting sites. The arresting sites in DNA have the property of trapping a certain fraction of elongating RNA polymerases that pass through, resulting in locked ternary complexes. Cleavage of the nascent transcript by cleavage factors such as GreA or GreB allows the resumption of elongation from the new 3'terminus. GreA releases sequences of 2 to 3 nucleotides. The sequence is that of Transcription elongation factor GreA from Alkaliphilus oremlandii (strain OhILAs) (Clostridium oremlandii (strain OhILAs)).